Reading from the N-terminus, the 169-residue chain is NADH-quinone oxidoreductase subunit I (169 aa).

2 4Fe-4S ferredoxin-type domains span residues Leu60–Glu90 and Thr100–Asn129. [4Fe-4S] cluster is bound by residues Cys70, Cys73, Cys76, Cys80, Cys109, Cys112, Cys115, and Cys119.

Belongs to the complex I 23 kDa subunit family. In terms of assembly, NDH-1 is composed of 14 different subunits. Subunits NuoA, H, J, K, L, M, N constitute the membrane sector of the complex. [4Fe-4S] cluster is required as a cofactor.

It is found in the cell membrane. It catalyses the reaction a quinone + NADH + 5 H(+)(in) = a quinol + NAD(+) + 4 H(+)(out). Functionally, NDH-1 shuttles electrons from NADH, via FMN and iron-sulfur (Fe-S) centers, to quinones in the respiratory chain. The immediate electron acceptor for the enzyme in this species is believed to be ubiquinone. Couples the redox reaction to proton translocation (for every two electrons transferred, four hydrogen ions are translocated across the cytoplasmic membrane), and thus conserves the redox energy in a proton gradient. This chain is NADH-quinone oxidoreductase subunit I, found in Wolbachia pipientis wMel.